The sequence spans 518 residues: Circadian clock oscillator protein KaiC (518 aa).

Residues 1-247 (MTNLPEHQSS…FTINNGINIF (247 aa)) form the KaiC 1 domain. Residues Ser-49, Gly-50, Thr-51, Gly-52, Lys-53, Thr-54, and Leu-55 each contribute to the ATP site. Thr-54 is a binding site for Mg(2+). Glu-78 serves as the catalytic Proton acceptor in CI (KaiC 1). An ATP-binding site is contributed by Ser-90. The interval 116-123 (QEVAGDFD) is B-loop, required to bind KaiB and SasA. Positions 225, 226, 227, 229, and 231 each coordinate ATP. Residues 248 to 260 (PLGAMRLTQRSSN) form a linker region. The 258-residue stretch at 261–518 (VRVSSGVKTL…AKGMQDLESE (258 aa)) folds into the KaiC 2 domain. ATP contacts are provided by Thr-290, Gly-291, Thr-292, Gly-293, Lys-294, Thr-295, and Leu-296. Thr-295 is a Mg(2+) binding site. Glu-318 serves as a coordination point for Mg(2+). Glu-318 acts as the Proton acceptor in CII (KaiC 2) in catalysis. Residue Trp-331 participates in ATP binding. A Phosphoserine; by autocatalysis modification is found at Ser-431. Phosphothreonine; by autocatalysis is present on Thr-432. Residues Arg-451, Lys-457, Met-458, Arg-459, Ser-461, His-463, and Lys-465 each coordinate ATP. Residues 488–497 (GIISGTPTRI) are A-loop, interacts with KaiA.

This sequence belongs to the KaiC family. Homohexamer resembling 2 stacked donuts rings with a central pore nearly blocked on one side; hexamerization is dependent on ATP-binding. Binds 2 ATP per monomer, at the subunit interface on each ring. The KaiABC complex composition changes during the circadian cycle to control KaiC phosphorylation. Complexes KaiC(6), KaiA(2-4):KaiC(6), KaiB(6):KaiC(6) and KaiC(6):KaiB(6):KaiA(12) are among the most important forms, many form cooperatively. Interacts with SasA, probably as 1 SasA trimer:1 KaiC homohexamer, has highest affinity for unphosphorylated SasA. The CI domain binds to KaiB and SasA; as they have a similar fold they compete for the same site on CI. KaiB assumes a thioredoxin-like form called KaiB(fs) when bound to KaiC. Mg(2+) is required as a cofactor. Post-translationally, phosphorylated on serine/threonine residues by autocatalysis. Both phosphorylated and unphosphorylated forms exist. Both autophosphorylates and autodephosphorylates. Phosphorylated form correlates with clock speed. In terms of processing, phosphorylated on serine and threonine residues by autocatalysis. Has a 4 step phosphorylation cycle; the autokinase acts first on Thr-432, then Ser-431. When Ser-431 is modified KaiC switches to an autophosphatase mode, acting first on phospho-Thr-432 then phospho-Ser-431.

The catalysed reaction is L-seryl-[protein] + ATP = O-phospho-L-seryl-[protein] + ADP + H(+). The enzyme catalyses L-threonyl-[protein] + ATP = O-phospho-L-threonyl-[protein] + ADP + H(+). It carries out the reaction ATP + H2O = ADP + phosphate + H(+). Its activity is regulated as follows. The interaction with KaiA enhances its phosphorylation status, while the interaction with KaiB decreases it. In terms of biological role, central component of the KaiABC oscillator complex, which constitutes the main circadian regulator in cyanobacteria. Complex composition changes during the circadian cycle to control KaiC phosphorylation. KaiA stimulates KaiC autophosphorylation, while KaiB sequesters KaiA, leading to KaiC autodephosphorylation. Clock output pathways impact the RpaA transcriptional regulator. KaiC enhances the autophosphorylation activity of SasA, which then transfers its phosphate group to RpaA to activate it. KaiB and KaiC together enhance the phospho-RpaA dephosphatase activity of CikA. Functionally, stimulates SasA autophosphorylation. Fully phosphorylated KaiC (tested with phosphomimetic Asp-431-432-Asp) is the best stimulant, requires the ATPase activity of the CII domain. Unphosphorylated SasA associates with KaiC and its autophosphorylation activity is enhanced. Phospho-SasA is released and associates with RpaA, transferring its phosphate group. Formation of the KaiA:KaiB complex is promoted by KaiC, helping switch KaiC from its autophosphorylation to autodephosphatase function. Has a weak, temperature-independent ATPase activity (about 14 molecules of ATP per day) that defines the circadian period. ATPase activity is mostly contributed by the CI domain; the CII domain augments the activity. The addition of KaiA increases activity. ATPase is inhibited during the KaiC phosphorylating phase and activated during the KaiC dephosphorylating phase. The protein is Circadian clock oscillator protein KaiC of Thermosynechococcus vestitus (strain NIES-2133 / IAM M-273 / BP-1).